Consider the following 896-residue polypeptide: MKKLSTNQIRKIWLDFFISKNHYFLEPVSLIPVDDPSLLWINSGVATLKPYFDGRKTPPSPRLTNSQKAIRTNDIENVGVTARHHTMFEMLGNFSIGDYFKKEAIELAWELLTDKNYFDIDKNKLYITVFNEDIEAYNIWKDVIKIDEDHIFRLSKKTNFWDVGQGPCGPNTEIFYDRGEIWDPNKIGPRLISDDIENDRYIEVWNIVFSQFNNDGNNNYVELPRKNIDTGAGLERFASIFQNTPTNFETDIFYPTIKKVEQLTNNQFKYSIDNYFNPNKKQTRINTAFKVIADHIRATVFAISDGVFPGNKDRGYIIRRLIRRSCVFGNELGIKQAFLYKLVDSVIESMKEFYPYLVDKKSLVEQTIKDEEEKFLKTLSKGYDLLENIIKTKNTVSDKDALLLFESYGFPIEQTIEISELSNVTVDIEGFKKLLEQTKQATRNARKDLKAWDKQNELFTKLKVESEFTGWSEISRDNAKVIYMFTDQKQVESITDQEVFVILDKTPFYAEKGGQAADSGIIFNDQMKGFVIDVQQGPMHQNIHRIKVQDTLKLNDLINCRVDEEKRIYTMKNHSGTHMIHYALREVLGSSVMQSGSYNDENGLRMDFTYHRLPTNQELLKAQNLVLEKIKNKVDRQTYFCSLEESVKKHQALAFFTEKYDEIVRVIKFGDFSSELCGGTHVNNTSEIEDFIITGIESKGSGLYRIKCLTSFKTVNEYLNEQFKIYKDQAEIIIDKYNQNKDLLKNDQLENIYLEIKNITINKDNLILIKDLLDKLRDLNKDYDKKVNDLITANKLLKYKDLTPSLNKDNVNEIKLETTDLNIRDLKQLADDLRNKYNDLIVILLSSTNENNFIVVAVSQSLQNKYKAIDIFNNLEGYETKGGGNANLAQGKFVKK.

His-574, His-578, Cys-677, and His-681 together coordinate Zn(2+).

It belongs to the class-II aminoacyl-tRNA synthetase family. Zn(2+) serves as cofactor.

It localises to the cytoplasm. It carries out the reaction tRNA(Ala) + L-alanine + ATP = L-alanyl-tRNA(Ala) + AMP + diphosphate. Functionally, catalyzes the attachment of alanine to tRNA(Ala) in a two-step reaction: alanine is first activated by ATP to form Ala-AMP and then transferred to the acceptor end of tRNA(Ala). Also edits incorrectly charged Ser-tRNA(Ala) and Gly-tRNA(Ala) via its editing domain. The protein is Alanine--tRNA ligase of Mycoplasma capricolum subsp. capricolum (strain California kid / ATCC 27343 / NCTC 10154).